A 314-amino-acid chain; its full sequence is tRNA dimethylallyltransferase (314 aa).

12–19 contributes to the ATP binding site; that stretch reads GPTAAGKS. Residue 14 to 19 participates in substrate binding; the sequence is TAAGKS. Interaction with substrate tRNA regions lie at residues 37-40, 161-165, and 245-250; these read DSAT, QRIQR, and RCVGYR.

It belongs to the IPP transferase family. As to quaternary structure, monomer. Mg(2+) serves as cofactor.

The catalysed reaction is adenosine(37) in tRNA + dimethylallyl diphosphate = N(6)-dimethylallyladenosine(37) in tRNA + diphosphate. Functionally, catalyzes the transfer of a dimethylallyl group onto the adenine at position 37 in tRNAs that read codons beginning with uridine, leading to the formation of N6-(dimethylallyl)adenosine (i(6)A). This chain is tRNA dimethylallyltransferase, found in Bordetella petrii (strain ATCC BAA-461 / DSM 12804 / CCUG 43448).